Reading from the N-terminus, the 256-residue chain is MQLALICENPERQNELDELAQRWGLSHDENSIFALVLTDTQLELRKLDEAKLGAVFVDLVSGAAAHRRKFGGGRGQAIAKAVGLKKGVMPRVLDGTAGLGRDAFVLASLGCTVQMVERHPVVAALLDDGLARAKQDPEIGGWITERLSLLHASSQDALVKLLEDPDFIAPDVVYLDPMYPHKKKSALVKKEMRVFQTLVGADNDADSLFAPAMALATKRVVVKRPDYAEFLANAKPSTAIETKKNRFDVYVKAAMT.

S-adenosyl-L-methionine contacts are provided by residues 101–102 (RD), 117–118 (ER), 153–154 (SS), and aspartate 176.

This sequence belongs to the methyltransferase superfamily. RsmJ family.

The protein resides in the cytoplasm. It carries out the reaction guanosine(1516) in 16S rRNA + S-adenosyl-L-methionine = N(2)-methylguanosine(1516) in 16S rRNA + S-adenosyl-L-homocysteine + H(+). In terms of biological role, specifically methylates the guanosine in position 1516 of 16S rRNA. This chain is Ribosomal RNA small subunit methyltransferase J, found in Photobacterium profundum (strain SS9).